The sequence spans 434 residues: Trigger factor (434 aa).

The PPIase FKBP-type domain maps to 162–247 (GDKINISLIA…FNTVEQAKLP (86 aa)).

Belongs to the FKBP-type PPIase family. Tig subfamily.

The protein resides in the cytoplasm. It carries out the reaction [protein]-peptidylproline (omega=180) = [protein]-peptidylproline (omega=0). In terms of biological role, involved in protein export. Acts as a chaperone by maintaining the newly synthesized protein in an open conformation. Functions as a peptidyl-prolyl cis-trans isomerase. This chain is Trigger factor, found in Methylobacillus flagellatus (strain ATCC 51484 / DSM 6875 / VKM B-1610 / KT).